A 292-amino-acid polypeptide reads, in one-letter code: Homoserine kinase (292 aa).

84-94 serves as a coordination point for ATP; sequence PLSRGLGSSSA.

This sequence belongs to the GHMP kinase family. Homoserine kinase subfamily.

The protein localises to the cytoplasm. The catalysed reaction is L-homoserine + ATP = O-phospho-L-homoserine + ADP + H(+). It participates in amino-acid biosynthesis; L-threonine biosynthesis; L-threonine from L-aspartate: step 4/5. Its function is as follows. Catalyzes the ATP-dependent phosphorylation of L-homoserine to L-homoserine phosphate. This is Homoserine kinase from Campylobacter jejuni subsp. jejuni serotype O:23/36 (strain 81-176).